We begin with the raw amino-acid sequence, 628 residues long: tRNA uridine 5-carboxymethylaminomethyl modification enzyme MnmG (628 aa).

Residue 13–18 (GAGHAG) participates in FAD binding. 273–287 (GPRYCPSIEDKIVRF) provides a ligand contact to NAD(+).

It belongs to the MnmG family. In terms of assembly, homodimer. Heterotetramer of two MnmE and two MnmG subunits. It depends on FAD as a cofactor.

It is found in the cytoplasm. NAD-binding protein involved in the addition of a carboxymethylaminomethyl (cmnm) group at the wobble position (U34) of certain tRNAs, forming tRNA-cmnm(5)s(2)U34. The chain is tRNA uridine 5-carboxymethylaminomethyl modification enzyme MnmG from Buchnera aphidicola subsp. Acyrthosiphon pisum (strain 5A).